The following is a 348-amino-acid chain: RNA 3'-terminal phosphate cyclase (348 aa).

Residues Q107 and 290-294 (HLADQ) contribute to the ATP site. The active-site Tele-AMP-histidine intermediate is H316.

This sequence belongs to the RNA 3'-terminal cyclase family. Type 1 subfamily.

Its subcellular location is the cytoplasm. The enzyme catalyses a 3'-end 3'-phospho-ribonucleotide-RNA + ATP = a 3'-end 2',3'-cyclophospho-ribonucleotide-RNA + AMP + diphosphate. Catalyzes the conversion of 3'-phosphate to a 2',3'-cyclic phosphodiester at the end of RNA. The mechanism of action of the enzyme occurs in 3 steps: (A) adenylation of the enzyme by ATP; (B) transfer of adenylate to an RNA-N3'P to produce RNA-N3'PP5'A; (C) and attack of the adjacent 2'-hydroxyl on the 3'-phosphorus in the diester linkage to produce the cyclic end product. The biological role of this enzyme is unknown but it is likely to function in some aspects of cellular RNA processing. The polypeptide is RNA 3'-terminal phosphate cyclase (Trichormus variabilis (strain ATCC 29413 / PCC 7937) (Anabaena variabilis)).